The primary structure comprises 202 residues: Ras-related protein RIC1 (202 aa).

GTP is bound by residues 15-23, 33-40, 63-67, 121-124, and 151-153; these read GDSGVGKSC, YLESYIST, DTAGQ, NKCD, and SAK. An Effector region motif is present at residues 37 to 45; that stretch reads YISTIGVDF. Residues 174–185 show a composition bias toward polar residues; the sequence is ASQPATNASKPA. Residues 174 to 202 form a disordered region; it reads ASQPATNASKPATVQMRGQPVAQQSSCCS. S-geranylgeranyl cysteine attachment occurs at residues cysteine 200 and cysteine 201.

This sequence belongs to the small GTPase superfamily. Rab family.

It localises to the cell membrane. Possesses GTPase activity. This is Ras-related protein RIC1 (RIC1) from Oryza sativa subsp. japonica (Rice).